The following is a 157-amino-acid chain: Transcriptional repressor NrdR (157 aa).

Residues 3–34 (CSNCQNKNTKVLDSRPIEEGRAIRRRRECERC) fold into a zinc finger. Positions 49–139 (LIVVKKDGVR…VYRQFKDITV (91 aa)) constitute an ATP-cone domain.

The protein belongs to the NrdR family. It depends on Zn(2+) as a cofactor.

Negatively regulates transcription of bacterial ribonucleotide reductase nrd genes and operons by binding to NrdR-boxes. The protein is Transcriptional repressor NrdR of Oceanobacillus iheyensis (strain DSM 14371 / CIP 107618 / JCM 11309 / KCTC 3954 / HTE831).